The chain runs to 212 residues: Thymidylate kinase (212 aa).

Position 10 to 17 (10 to 17) interacts with ATP; sequence GLEGAGKT.

This sequence belongs to the thymidylate kinase family.

It catalyses the reaction dTMP + ATP = dTDP + ADP. Functionally, phosphorylation of dTMP to form dTDP in both de novo and salvage pathways of dTTP synthesis. The protein is Thymidylate kinase of Yersinia pseudotuberculosis serotype O:3 (strain YPIII).